The sequence spans 142 residues: Large ribosomal subunit protein uL16 (142 aa).

It belongs to the universal ribosomal protein uL16 family. As to quaternary structure, part of the 50S ribosomal subunit.

In terms of biological role, binds 23S rRNA and is also seen to make contacts with the A and possibly P site tRNAs. The chain is Large ribosomal subunit protein uL16 from Aquifex aeolicus (strain VF5).